Consider the following 160-residue polypeptide: Transcription antitermination protein NusB (160 aa).

Belongs to the NusB family.

In terms of biological role, involved in transcription antitermination. Required for transcription of ribosomal RNA (rRNA) genes. Binds specifically to the boxA antiterminator sequence of the ribosomal RNA (rrn) operons. In Rhizobium johnstonii (strain DSM 114642 / LMG 32736 / 3841) (Rhizobium leguminosarum bv. viciae), this protein is Transcription antitermination protein NusB.